The chain runs to 312 residues: Glutathione synthetase (312 aa).

The 185-residue stretch at 125–309 folds into the ATP-grasp domain; sequence KIFVTEFPDL…IAALFWDAVE (185 aa). 151–207 contacts ATP; it reads RREFGDIILKPLYGNGGAGVFHLADGDRNLTSLLEMFGQLFREPFIAQRYLKDVRAG. Positions 280 and 282 each coordinate Mg(2+).

The protein belongs to the prokaryotic GSH synthase family. Mg(2+) is required as a cofactor. Mn(2+) serves as cofactor.

The catalysed reaction is gamma-L-glutamyl-L-cysteine + glycine + ATP = glutathione + ADP + phosphate + H(+). Its pathway is sulfur metabolism; glutathione biosynthesis; glutathione from L-cysteine and L-glutamate: step 2/2. The protein is Glutathione synthetase of Brucella melitensis biotype 1 (strain ATCC 23456 / CCUG 17765 / NCTC 10094 / 16M).